Reading from the N-terminus, the 93-residue chain is Cell division topological specificity factor (93 aa).

Belongs to the MinE family.

Functionally, prevents the cell division inhibition by proteins MinC and MinD at internal division sites while permitting inhibition at polar sites. This ensures cell division at the proper site by restricting the formation of a division septum at the midpoint of the long axis of the cell. This chain is Cell division topological specificity factor, found in Synechococcus sp. (strain WH7803).